The chain runs to 371 residues: UDP-N-acetylglucosamine--N-acetylmuramyl-(pentapeptide) pyrophosphoryl-undecaprenol N-acetylglucosamine transferase (371 aa).

UDP-N-acetyl-alpha-D-glucosamine is bound by residues 10–12, Asn-124, Arg-165, Ser-191, Ile-246, and Gln-291; that span reads TGG.

The protein belongs to the glycosyltransferase 28 family. MurG subfamily.

It is found in the cell inner membrane. The enzyme catalyses di-trans,octa-cis-undecaprenyl diphospho-N-acetyl-alpha-D-muramoyl-L-alanyl-D-glutamyl-meso-2,6-diaminopimeloyl-D-alanyl-D-alanine + UDP-N-acetyl-alpha-D-glucosamine = di-trans,octa-cis-undecaprenyl diphospho-[N-acetyl-alpha-D-glucosaminyl-(1-&gt;4)]-N-acetyl-alpha-D-muramoyl-L-alanyl-D-glutamyl-meso-2,6-diaminopimeloyl-D-alanyl-D-alanine + UDP + H(+). The protein operates within cell wall biogenesis; peptidoglycan biosynthesis. Its function is as follows. Cell wall formation. Catalyzes the transfer of a GlcNAc subunit on undecaprenyl-pyrophosphoryl-MurNAc-pentapeptide (lipid intermediate I) to form undecaprenyl-pyrophosphoryl-MurNAc-(pentapeptide)GlcNAc (lipid intermediate II). In Geobacter sp. (strain M21), this protein is UDP-N-acetylglucosamine--N-acetylmuramyl-(pentapeptide) pyrophosphoryl-undecaprenol N-acetylglucosamine transferase.